Reading from the N-terminus, the 201-residue chain is UPF0301 protein MAP_0045 (201 aa).

The protein belongs to the UPF0301 (AlgH) family.

This chain is UPF0301 protein MAP_0045, found in Mycolicibacterium paratuberculosis (strain ATCC BAA-968 / K-10) (Mycobacterium paratuberculosis).